Consider the following 368-residue polypeptide: (Iso)eugenol O-methyltransferase (368 aa).

A propeptide spanning residues 1 to 2 (MG) is cleaved from the precursor. S-adenosyl-L-methionine is bound by residues serine 187, 211 to 212 (GG), aspartate 234, 254 to 255 (DM), and lysine 268. Histidine 272 functions as the Proton acceptor in the catalytic mechanism.

The protein belongs to the class I-like SAM-binding methyltransferase superfamily. Cation-independent O-methyltransferase family. COMT subfamily. Homodimer. Expressed in petals, style and stamens, but not in stigma, sepals, leaves or stem tissues.

The enzyme catalyses (E)-isoeugenol + S-adenosyl-L-methionine = (E)-isomethyleugenol + S-adenosyl-L-homocysteine + H(+). Catalyzes the methylation of the para-4-hydroxyl of both eugenol and (iso)eugenol to methyleugenol and isomethyleugenol, respectively. The resulting products are part of a complex mixture of low-molecular-weight volatile compounds emitted by the flowers to attract pollinators. This Clarkia breweri (Fairy fans) protein is (Iso)eugenol O-methyltransferase (IEMT1).